We begin with the raw amino-acid sequence, 306 residues long: Dihydroorotate dehydrogenase B (NAD(+)), catalytic subunit (306 aa).

FMN is bound by residues Ser22 and 46–47; that span reads KG. Substrate-binding positions include Lys46 and 70–74; that span reads NAIGL. FMN-binding residues include Asn100 and Asn128. Asn128 is a binding site for substrate. Cys131 serves as the catalytic Nucleophile. Positions 167 and 193 each coordinate FMN. 194–195 contributes to the substrate binding site; the sequence is NT. FMN is bound by residues Gly219, 245–246, and 267–268; these read GG and GT.

This sequence belongs to the dihydroorotate dehydrogenase family. Type 1 subfamily. In terms of assembly, heterotetramer of 2 PyrK and 2 PyrD type B subunits. It depends on FMN as a cofactor.

The protein resides in the cytoplasm. It catalyses the reaction (S)-dihydroorotate + NAD(+) = orotate + NADH + H(+). Its pathway is pyrimidine metabolism; UMP biosynthesis via de novo pathway; orotate from (S)-dihydroorotate (NAD(+) route): step 1/1. Functionally, catalyzes the conversion of dihydroorotate to orotate with NAD(+) as electron acceptor. This is Dihydroorotate dehydrogenase B (NAD(+)), catalytic subunit (pyrD) from Solidesulfovibrio magneticus (strain ATCC 700980 / DSM 13731 / RS-1) (Desulfovibrio magneticus).